We begin with the raw amino-acid sequence, 94 residues long: Co-chaperonin GroES (94 aa).

Belongs to the GroES chaperonin family. Heptamer of 7 subunits arranged in a ring. Interacts with the chaperonin GroEL.

The protein localises to the cytoplasm. In terms of biological role, together with the chaperonin GroEL, plays an essential role in assisting protein folding. The GroEL-GroES system forms a nano-cage that allows encapsulation of the non-native substrate proteins and provides a physical environment optimized to promote and accelerate protein folding. GroES binds to the apical surface of the GroEL ring, thereby capping the opening of the GroEL channel. The sequence is that of Co-chaperonin GroES from Brevibacillus choshinensis.